The following is a 718-amino-acid chain: Phenylalanine--tRNA ligase beta subunit (718 aa).

Positions 40 to 153 constitute a tRNA-binding domain; the sequence is FLNVSKIKFG…KADLKQDPID (114 aa). The B5 domain maps to 387-462; it reads DKKESFNFVW…RFYGYENLVF (76 aa). Mg(2+) is bound by residues aspartate 440, aspartate 446, glutamate 449, and glutamate 450.

It belongs to the phenylalanyl-tRNA synthetase beta subunit family. Type 1 subfamily. Tetramer of two alpha and two beta subunits. Requires Mg(2+) as cofactor.

Its subcellular location is the cytoplasm. The catalysed reaction is tRNA(Phe) + L-phenylalanine + ATP = L-phenylalanyl-tRNA(Phe) + AMP + diphosphate + H(+). The chain is Phenylalanine--tRNA ligase beta subunit from Mycoplasmopsis pulmonis (strain UAB CTIP) (Mycoplasma pulmonis).